Reading from the N-terminus, the 517-residue chain is Intermediate filament family orphan 2 (517 aa).

In terms of domain architecture, IF rod spans N53–N484. Disordered stretches follow at residues E104–A129, K330–D349, and K478–S517. Residues S485 to G497 show a composition bias toward low complexity. The span at E501–S517 shows a compositional bias: acidic residues.

The protein belongs to the intermediate filament family.

The protein is Intermediate filament family orphan 2 (IFFO2) of Homo sapiens (Human).